The chain runs to 161 residues: 6,7-dimethyl-8-ribityllumazine synthase (161 aa).

Residues Trp-31, 65-67, and 89-91 contribute to the 5-amino-6-(D-ribitylamino)uracil site; these read TFE and CVV. 94 to 95 lines the (2S)-2-hydroxy-3-oxobutyl phosphate pocket; the sequence is DT. The Proton donor role is filled by His-97. Phe-122 contacts 5-amino-6-(D-ribitylamino)uracil. Arg-136 is a binding site for (2S)-2-hydroxy-3-oxobutyl phosphate.

It belongs to the DMRL synthase family.

It carries out the reaction (2S)-2-hydroxy-3-oxobutyl phosphate + 5-amino-6-(D-ribitylamino)uracil = 6,7-dimethyl-8-(1-D-ribityl)lumazine + phosphate + 2 H2O + H(+). It functions in the pathway cofactor biosynthesis; riboflavin biosynthesis; riboflavin from 2-hydroxy-3-oxobutyl phosphate and 5-amino-6-(D-ribitylamino)uracil: step 1/2. Functionally, catalyzes the formation of 6,7-dimethyl-8-ribityllumazine by condensation of 5-amino-6-(D-ribitylamino)uracil with 3,4-dihydroxy-2-butanone 4-phosphate. This is the penultimate step in the biosynthesis of riboflavin. In Porphyromonas gingivalis (strain ATCC 33277 / DSM 20709 / CIP 103683 / JCM 12257 / NCTC 11834 / 2561), this protein is 6,7-dimethyl-8-ribityllumazine synthase.